Consider the following 448-residue polypeptide: Serine--tRNA ligase (448 aa).

L-serine is bound at residue 246–248 (TAE). ATP contacts are provided by residues 277-279 (RKE) and V293. E300 contacts L-serine. 364–367 (ELAS) serves as a coordination point for ATP. T399 contributes to the L-serine binding site.

The protein belongs to the class-II aminoacyl-tRNA synthetase family. Type-1 seryl-tRNA synthetase subfamily. In terms of assembly, homodimer. The tRNA molecule binds across the dimer.

It localises to the cytoplasm. The catalysed reaction is tRNA(Ser) + L-serine + ATP = L-seryl-tRNA(Ser) + AMP + diphosphate + H(+). The enzyme catalyses tRNA(Sec) + L-serine + ATP = L-seryl-tRNA(Sec) + AMP + diphosphate + H(+). It functions in the pathway aminoacyl-tRNA biosynthesis; selenocysteinyl-tRNA(Sec) biosynthesis; L-seryl-tRNA(Sec) from L-serine and tRNA(Sec): step 1/1. Catalyzes the attachment of serine to tRNA(Ser). Is also able to aminoacylate tRNA(Sec) with serine, to form the misacylated tRNA L-seryl-tRNA(Sec), which will be further converted into selenocysteinyl-tRNA(Sec). In Pyrobaculum islandicum (strain DSM 4184 / JCM 9189 / GEO3), this protein is Serine--tRNA ligase.